The chain runs to 377 residues: Nitric oxide reductase FlRd-NAD(+) reductase (377 aa).

The protein belongs to the FAD-dependent oxidoreductase family. It depends on FAD as a cofactor.

The protein resides in the cytoplasm. The catalysed reaction is 2 reduced [nitric oxide reductase rubredoxin domain] + NAD(+) + H(+) = 2 oxidized [nitric oxide reductase rubredoxin domain] + NADH. The protein operates within nitrogen metabolism; nitric oxide reduction. One of at least two accessory proteins for anaerobic nitric oxide (NO) reductase. Reduces the rubredoxin moiety of NO reductase. This Citrobacter koseri (strain ATCC BAA-895 / CDC 4225-83 / SGSC4696) protein is Nitric oxide reductase FlRd-NAD(+) reductase.